Here is a 547-residue protein sequence, read N- to C-terminus: Glucocorticoid-induced transcript 1 protein (547 aa).

Residues 1-13 show a composition bias toward low complexity; the sequence is MSTASSSSSSSSS. 2 disordered regions span residues 1–55 and 72–285; these read MSTA…APAA and LLRG…LSNI. The residue at position 20 (Ser-20) is a Phosphoserine. Residues 26–38 are compositionally biased toward low complexity; sequence SAAGSPPAVAAAG. Positions 39-50 are enriched in gly residues; that stretch reads SGNGAGGGGGVG. Ser-79, Ser-105, Ser-107, and Ser-108 each carry phosphoserine. Low complexity predominate over residues 86 to 105; the sequence is AAAAASLGSLPGPGAARGPS. The residue at position 110 (Thr-110) is a Phosphothreonine. Positions 130-145 are enriched in basic and acidic residues; it reads RSPESHRRSSSPERRS. A compositionally biased stretch (low complexity) spans 162 to 177; sequence RTSSTIRRTSSLDTIT. Ser-171 and Ser-172 each carry phosphoserine. 2 positions are modified to phosphothreonine: Thr-175 and Thr-177. Positions 187–201 are enriched in basic and acidic residues; that stretch reads RDPHVHYPSCMKDKA. Ser-223 carries the phosphoserine modification. Residues 225-254 are a coiled coil; that stretch reads GSADQLKEQIAKLRQQLQRSKQSSRHSKEK. A compositionally biased stretch (low complexity) spans 236-245; it reads KLRQQLQRSK. Ser-258 carries the phosphoserine modification. Residues 265-276 show a composition bias toward polar residues; that stretch reads ITISHTQATGSR. Thr-266 bears the Phosphothreonine mark. Phosphoserine is present on Ser-303. Residues 319–331 are compositionally biased toward basic and acidic residues; it reads EVSKPLDIPDGRR. A disordered region spans residues 319–417; that stretch reads EVSKPLDIPD…KPNNSYMFKR (99 aa). The span at 339-356 shows a compositional bias: polar residues; sequence RSSSTRSIDTQTPSVQER. Thr-343 is subject to Phosphothreonine. A Phosphoserine modification is found at Ser-345. Thr-350 bears the Phosphothreonine mark. A compositionally biased stretch (low complexity) spans 357 to 369; it reads SSSCSSHSPCVSP. A phosphoserine mark is found at Ser-394, Ser-398, Ser-406, Ser-412, and Ser-480. The segment covering 505–520 has biased composition (polar residues); sequence SLSDDTSTAGSMEASV. Residues 505–530 are disordered; sequence SLSDDTSTAGSMEASVQQPSQQQQLL. The segment covering 521 to 530 has biased composition (low complexity); the sequence is QQPSQQQQLL.

Predominantly expressed in lung, spleen, thymus and testis and, at lower levels, in brain, bone marrow, peripheral leukocytes, skin and trachea.

This Homo sapiens (Human) protein is Glucocorticoid-induced transcript 1 protein (GLCCI1).